The chain runs to 64 residues: Large ribosomal subunit protein uL29 (64 aa).

Belongs to the universal ribosomal protein uL29 family.

The protein is Large ribosomal subunit protein uL29 of Coprothermobacter proteolyticus (strain ATCC 35245 / DSM 5265 / OCM 4 / BT).